We begin with the raw amino-acid sequence, 489 residues long: 3-octaprenyl-4-hydroxybenzoate carboxy-lyase (489 aa).

A Mn(2+)-binding site is contributed by Asn-172. Prenylated FMN is bound by residues 175–177 (IYR), 189–191 (RWL), and 194–195 (RG). Residue Glu-238 participates in Mn(2+) binding. Asp-287 acts as the Proton donor in catalysis.

The protein belongs to the UbiD family. Homohexamer. The cofactor is prenylated FMN. Mn(2+) serves as cofactor.

It localises to the cell membrane. It carries out the reaction a 4-hydroxy-3-(all-trans-polyprenyl)benzoate + H(+) = a 2-(all-trans-polyprenyl)phenol + CO2. Its pathway is cofactor biosynthesis; ubiquinone biosynthesis. In terms of biological role, catalyzes the decarboxylation of 3-octaprenyl-4-hydroxy benzoate to 2-octaprenylphenol, an intermediate step in ubiquinone biosynthesis. This chain is 3-octaprenyl-4-hydroxybenzoate carboxy-lyase, found in Salmonella paratyphi B (strain ATCC BAA-1250 / SPB7).